The primary structure comprises 201 residues: Holliday junction resolvase RecU (201 aa).

Residues Thr87, Asp89, Asp102, and Gln121 each contribute to the Mg(2+) site.

The protein belongs to the RecU family. Requires Mg(2+) as cofactor.

It localises to the cytoplasm. It catalyses the reaction Endonucleolytic cleavage at a junction such as a reciprocal single-stranded crossover between two homologous DNA duplexes (Holliday junction).. Functionally, endonuclease that resolves Holliday junction intermediates in genetic recombination. Cleaves mobile four-strand junctions by introducing symmetrical nicks in paired strands. Promotes annealing of linear ssDNA with homologous dsDNA. Required for DNA repair, homologous recombination and chromosome segregation. This is Holliday junction resolvase RecU from Levilactobacillus brevis (strain ATCC 367 / BCRC 12310 / CIP 105137 / JCM 1170 / LMG 11437 / NCIMB 947 / NCTC 947) (Lactobacillus brevis).